A 59-amino-acid polypeptide reads, in one-letter code: Small ribosomal subunit protein bS21 (59 aa).

The protein belongs to the bacterial ribosomal protein bS21 family.

This is Small ribosomal subunit protein bS21 from Acholeplasma laidlawii (strain PG-8A).